The chain runs to 338 residues: Replication factor C small subunit (338 aa).

53 to 60 contributes to the ATP binding site; that stretch reads GPPGVGKT.

This sequence belongs to the activator 1 small subunits family. RfcS subfamily. In terms of assembly, heteromultimer composed of small subunits (RfcS) and large subunits (RfcL).

Part of the RFC clamp loader complex which loads the PCNA sliding clamp onto DNA. The sequence is that of Replication factor C small subunit from Methanosarcina acetivorans (strain ATCC 35395 / DSM 2834 / JCM 12185 / C2A).